Here is a 210-residue protein sequence, read N- to C-terminus: Isochorismatase domain-containing protein 2 (210 aa).

Serine 7 carries the phosphoserine modification.

The protein belongs to the isochorismatase family. Interacts with CDKN2A.

Its subcellular location is the cytoplasm. It localises to the nucleus. This chain is Isochorismatase domain-containing protein 2 (Isoc2), found in Rattus norvegicus (Rat).